The chain runs to 222 residues: Glutathione S-transferase A1 (222 aa).

Residue Met-1 is modified to N-acetylmethionine. An N-acetylalanine; in Glutathione S-transferase A1, N-terminally processed modification is found at Ala-2. The region spanning 3-83 is the GST N-terminal domain; it reads EKPKLHYFNA…YIASKYNLYG (81 aa). Position 4 is an N6-succinyllysine (Lys-4). Residues Tyr-9, Arg-45, 54–55, and 67–68 contribute to the glutathione site; these read QV and QT. Residues 85 to 207 enclose the GST C-terminal domain; it reads DIKERALIDM…LQPGSPRKPP (123 aa).

It belongs to the GST superfamily. Alpha family. As to quaternary structure, homodimer or heterodimer of GSTA1 and GSTA2. In terms of tissue distribution, liver.

Its subcellular location is the cytoplasm. The enzyme catalyses RX + glutathione = an S-substituted glutathione + a halide anion + H(+). It carries out the reaction prostaglandin A2 + glutathione = prostaglandin A2-S-(R)-glutathione. It catalyses the reaction prostaglandin J2 + glutathione = prostaglandin J2-S-(R)-glutathione. The catalysed reaction is (13S)-hydroperoxy-(9Z,11E)-octadecadienoate + 2 glutathione = (13S)-hydroxy-(9Z,11E)-octadecadienoate + glutathione disulfide + H2O. The enzyme catalyses androst-5-ene-3,17-dione = androst-4-ene-3,17-dione. Its activity is regulated as follows. The isomerase activity is inhibited by S-methylglutathione (GSMe). In terms of biological role, glutathione S-transferase that catalyzes the nucleophilic attack of the sulfur atom of glutathione on the electrophilic groups of a wide range of exogenous and endogenous compounds. Involved in the formation of glutathione conjugates of both prostaglandin A2 (PGA2) and prostaglandin J2 (PGJ2). It also catalyzes the isomerization of D5-androstene-3,17-dione (AD) into D4-androstene-3,17-dione and may therefore play an important role in hormone biosynthesis. Through its glutathione-dependent peroxidase activity toward the fatty acid hydroperoxide (13S)-hydroperoxy-(9Z,11E)-octadecadienoate/13-HPODE it is also involved in the metabolism of oxidized linoleic acid. This chain is Glutathione S-transferase A1 (GSTA1), found in Homo sapiens (Human).